We begin with the raw amino-acid sequence, 509 residues long: Circadian clock oscillator protein KaiC (509 aa).

2 KaiC domains span residues 1–243 and 257–509; these read MKDK…IIVF and IRIS…IEKN. The ATP site is built by glycine 45, threonine 46, glycine 47, lysine 48, threonine 49, serine 85, lysine 220, leucine 221, arginine 222, threonine 224, histidine 226, aspartate 237, threonine 286, glycine 287, threonine 288, glycine 289, lysine 290, and threonine 291. Residue threonine 49 coordinates Mg(2+). Mg(2+) is bound by residues threonine 291 and glutamate 314. Position 327 (tryptophan 327) interacts with ATP. Serine 427 carries the phosphoserine; by autocatalysis modification. Threonine 428 bears the Phosphothreonine; by autocatalysis mark. ATP-binding residues include arginine 447, lysine 453, methionine 454, arginine 455, serine 457, histidine 459, and lysine 461.

This sequence belongs to the KaiC family. Homohexamer; hexamerization is dependent on ATP-binding. Component of the KaiBC complex. KaiC interacts with SasA, activating its autokinase function and leading to RpaA activation. Mg(2+) serves as cofactor. Phosphorylated on serine and threonine residues by autocatalysis. Has a 4 step phosphorylation cycle; the autokinase acts first on Thr-428, then Ser-427. When Ser-427 is modified KaiC switches to an autophosphatase mode, acting first on phospho-Thr-428 then phospho-Ser-427.

The catalysed reaction is L-seryl-[protein] + ATP = O-phospho-L-seryl-[protein] + ADP + H(+). It catalyses the reaction L-threonyl-[protein] + ATP = O-phospho-L-threonyl-[protein] + ADP + H(+). The enzyme catalyses ATP + H2O = ADP + phosphate + H(+). Central component of the KaiBC oscillator complex, which constitutes the main circadian regulator in cyanobacteria. Its composition changes during the circadian cycle to control KaiC phosphorylation. Autophosphorylates and has a weak ATPase activity; ATPase activity defines the circadian period. The sequence is that of Circadian clock oscillator protein KaiC from Prochlorococcus marinus subsp. pastoris (strain CCMP1986 / NIES-2087 / MED4).